Reading from the N-terminus, the 374-residue chain is Type II methyltransferase M.BbvI (374 aa).

The SAM-dependent MTase C5-type domain occupies 3–347; it reads FRKGELFCGP…EAVLKTFARI (345 aa). Cys-92 is an active-site residue.

The protein belongs to the class I-like SAM-binding methyltransferase superfamily. C5-methyltransferase family.

It catalyses the reaction a 2'-deoxycytidine in DNA + S-adenosyl-L-methionine = a 5-methyl-2'-deoxycytidine in DNA + S-adenosyl-L-homocysteine + H(+). A methylase, recognizes the double-stranded sequence 5'-GCAGC-3', methylates C-2 on both strands, and protects the DNA from cleavage by the BbvI endonuclease. The chain is Type II methyltransferase M.BbvI (bbvIM) from Brevibacillus brevis (Bacillus brevis).